Consider the following 308-residue polypeptide: Coenzyme PQQ synthesis protein B (308 aa).

This sequence belongs to the PqqB family.

The protein operates within cofactor biosynthesis; pyrroloquinoline quinone biosynthesis. May be involved in the transport of PQQ or its precursor to the periplasm. This is Coenzyme PQQ synthesis protein B from Klebsiella pneumoniae (strain 342).